Reading from the N-terminus, the 251-residue chain is Large ribosomal subunit protein uL3 (251 aa).

2 disordered regions span residues 140 to 162 (SHRSIGSTGGRQDPGKTFKNKKM) and 229 to 251 (AAPAGAVQAAQAAPEAPAAEENA). N5-methylglutamine is present on Gln-151.

The protein belongs to the universal ribosomal protein uL3 family. In terms of assembly, part of the 50S ribosomal subunit. Forms a cluster with proteins L14 and L19. In terms of processing, methylated by PrmB.

In terms of biological role, one of the primary rRNA binding proteins, it binds directly near the 3'-end of the 23S rRNA, where it nucleates assembly of the 50S subunit. This chain is Large ribosomal subunit protein uL3, found in Methylobacterium nodulans (strain LMG 21967 / CNCM I-2342 / ORS 2060).